Here is a 549-residue protein sequence, read N- to C-terminus: Hydroxylamine reductase (549 aa).

Positions 5, 8, 17, and 23 each coordinate [4Fe-4S] cluster. 8 residues coordinate hybrid [4Fe-2O-2S] cluster: His243, Glu267, Cys311, Cys403, Cys431, Cys456, Glu491, and Lys493. Residue Cys403 is modified to Cysteine persulfide.

The protein belongs to the HCP family. The cofactor is [4Fe-4S] cluster. Hybrid [4Fe-2O-2S] cluster is required as a cofactor.

The protein localises to the cytoplasm. It catalyses the reaction A + NH4(+) + H2O = hydroxylamine + AH2 + H(+). In terms of biological role, catalyzes the reduction of hydroxylamine to form NH(3) and H(2)O. In Desulfitobacterium hafniense (strain Y51), this protein is Hydroxylamine reductase.